A 122-amino-acid chain; its full sequence is Ig heavy chain V region M603 (122 aa).

An Ig-like domain is found at 1–121 (EVKLVESGGG…WGAGTTVTVS (121 aa)).

The polypeptide is Ig heavy chain V region M603 (Mus musculus (Mouse)).